A 334-amino-acid chain; its full sequence is Tryptophan--tRNA ligase (334 aa).

ATP contacts are provided by residues 11-13 (QPT) and 19-20 (GN). A 'HIGH' region motif is present at residues 12–20 (PTGKLTIGN). Asp-135 provides a ligand contact to L-tryptophan. ATP-binding positions include 147 to 149 (GED), Ile-186, and 195 to 199 (KMSKS). The 'KMSKS' region motif lies at 195-199 (KMSKS).

The protein belongs to the class-I aminoacyl-tRNA synthetase family. As to quaternary structure, homodimer.

It localises to the cytoplasm. It carries out the reaction tRNA(Trp) + L-tryptophan + ATP = L-tryptophyl-tRNA(Trp) + AMP + diphosphate + H(+). Its function is as follows. Catalyzes the attachment of tryptophan to tRNA(Trp). This Blochmanniella floridana protein is Tryptophan--tRNA ligase.